Reading from the N-terminus, the 223-residue chain is Ubiquinone biosynthesis protein COQ4 homolog 2, mitochondrial (223 aa).

The transit peptide at 1-26 directs the protein to the mitochondrion; the sequence is MFLRRVHPVRLGHAIQRSLTTTKSRN. Positions 21–32 are enriched in low complexity; sequence TTKSRNESTTTT. The disordered stretch occupies residues 21 to 43; the sequence is TTKSRNESTTTTVEAPQAVPSPP. Zn(2+) is bound by residues H177, D178, H181, and E193.

This sequence belongs to the COQ4 family. Component of a multi-subunit COQ enzyme complex. Zn(2+) is required as a cofactor.

The protein localises to the mitochondrion inner membrane. It carries out the reaction a 4-hydroxy-3-methoxy-5-(all-trans-polyprenyl)benzoate + H(+) = a 2-methoxy-6-(all-trans-polyprenyl)phenol + CO2. It functions in the pathway cofactor biosynthesis; ubiquinone biosynthesis. Its function is as follows. Lyase that catalyzes the C1-decarboxylation of 4-hydroxy-3-methoxy-5-(all-trans-polyprenyl)benzoic acid into 2-methoxy-6-(all-trans-polyprenyl)phenol during ubiquinone biosynthesis. In Culex quinquefasciatus (Southern house mosquito), this protein is Ubiquinone biosynthesis protein COQ4 homolog 2, mitochondrial.